The primary structure comprises 66 residues: Kappa-flavitoxin (66 aa).

Intrachain disulfides connect Cys-3–Cys-21, Cys-14–Cys-42, Cys-27–Cys-31, Cys-46–Cys-58, and Cys-59–Cys-64.

It belongs to the three-finger toxin family. Long-chain subfamily. Kappa-neurotoxin sub-subfamily. As to quaternary structure, homo- and heterodimer; non-covalently linked. As to expression, expressed by the venom gland.

The protein localises to the secreted. Postsynaptic neurotoxin that binds and inhibits neuronal nicotinic acetylcholine receptors (nAChR) with high affinity (IC(50)&lt;100 nM). Is a selective, and slowly reversible antagonist of alpha-3/CHRNA3-containing and some alpha-4/CHRNA4-containing AChRs. The chain is Kappa-flavitoxin from Bungarus flaviceps flaviceps (Red-headed krait).